A 423-amino-acid polypeptide reads, in one-letter code: UDP-N-acetylglucosamine 1-carboxyvinyltransferase 1 (423 aa).

23–24 (KN) provides a ligand contact to phosphoenolpyruvate. Residue arginine 96 participates in UDP-N-acetyl-alpha-D-glucosamine binding. Cysteine 120 (proton donor) is an active-site residue. Position 120 is a 2-(S-cysteinyl)pyruvic acid O-phosphothioketal (cysteine 120). Residues 125–129 (RPIDL), aspartate 309, and valine 331 contribute to the UDP-N-acetyl-alpha-D-glucosamine site.

Belongs to the EPSP synthase family. MurA subfamily.

The protein localises to the cytoplasm. The enzyme catalyses phosphoenolpyruvate + UDP-N-acetyl-alpha-D-glucosamine = UDP-N-acetyl-3-O-(1-carboxyvinyl)-alpha-D-glucosamine + phosphate. It participates in cell wall biogenesis; peptidoglycan biosynthesis. Cell wall formation. Adds enolpyruvyl to UDP-N-acetylglucosamine. In Streptococcus thermophilus (strain CNRZ 1066), this protein is UDP-N-acetylglucosamine 1-carboxyvinyltransferase 1.